The chain runs to 313 residues: Protein-methionine-sulfoxide reductase catalytic subunit MsrP (313 aa).

Residues 1–46 constitute a signal peptide (tat-type signal); the sequence is MPSYRAPKIAAAEITPERFFLDRRTFIAAAAGSLALSVPKPSRAAA. Mo-molybdopterin contacts are provided by residues asparagine 70, 73–74, cysteine 127, threonine 162, asparagine 212, arginine 217, and 228–230; these read YE and GIK.

Belongs to the MsrP family. Heterodimer of a catalytic subunit (MsrP) and a heme-binding subunit (MsrQ). Requires Mo-molybdopterin as cofactor. Post-translationally, predicted to be exported by the Tat system. The position of the signal peptide cleavage has not been experimentally proven.

The protein resides in the periplasm. It carries out the reaction L-methionyl-[protein] + a quinone + H2O = L-methionyl-(S)-S-oxide-[protein] + a quinol. It catalyses the reaction L-methionyl-[protein] + a quinone + H2O = L-methionyl-(R)-S-oxide-[protein] + a quinol. Functionally, part of the MsrPQ system that repairs oxidized periplasmic proteins containing methionine sulfoxide residues (Met-O), using respiratory chain electrons. Thus protects these proteins from oxidative-stress damage caused by reactive species of oxygen and chlorine generated by the host defense mechanisms. MsrPQ is essential for the maintenance of envelope integrity under bleach stress, rescuing a wide series of structurally unrelated periplasmic proteins from methionine oxidation. The catalytic subunit MsrP is non-stereospecific, being able to reduce both (R-) and (S-) diastereoisomers of methionine sulfoxide. This Rhizobium meliloti (strain 1021) (Ensifer meliloti) protein is Protein-methionine-sulfoxide reductase catalytic subunit MsrP.